The chain runs to 137 residues: Ig heavy chain V region MOPC 315 (137 aa).

A signal peptide spans M1–S18. Residues D19 to T48 are framework-1. Cysteines 40 and 114 form a disulfide. Residues S49 to N54 form a complementarity-determining-1 region. The interval W55–G68 is framework-2. The complementarity-determining-2 stretch occupies residues F69–N84. Positions R85–G116 are framework-3. Positions D117–Y126 are complementarity-determining-3. The segment at W127–S137 is framework-4.

The chain is Ig heavy chain V region MOPC 315 from Mus musculus (Mouse).